A 492-amino-acid polypeptide reads, in one-letter code: Myocyte-specific enhancer factor 2A (492 aa).

The MADS-box domain occupies 3–57 (RKKIQITRIMDERNRQVTFTKRKFGLMKKAYELSVLCDCEIALIIFNSSNKLFQY). Residues 58-86 (ASTDMDKVLLKYTEYNEPHESRTNSDIVE) constitute a DNA-binding region (mef2-type). S59 carries the phosphoserine; by CK2 modification. S98 is subject to Phosphoserine. Positions 183–227 (PQATLHRNVSPGAPQRPPSTGSAGGMLSTSDLTVPNGAGSSPVGN) are disordered. Residues 209–227 (LSTSDLTVPNGAGSSPVGN) show a composition bias toward polar residues. S235 bears the Phosphoserine mark. A disordered region spans residues 242-270 (TGANSLGKVMPTKSPPPPGGGSLGMNSRK). N6-acetyllysine is present on K249. The residue at position 255 (S255) is a Phosphoserine. The segment at 266–283 (MNSRKPDLRVVIPPSSKG) is required for interaction with MAPKs. T304 and T311 each carry phosphothreonine; by MAPK7 and MAPK14. S347 bears the Phosphoserine; by MAPK7 mark. Residues 382–394 (SNLSINTNQNINI) are compositionally biased toward polar residues. The interval 382–492 (SNLSINTNQN…KRMRMDAWVT (111 aa)) is disordered. K395 carries the post-translational modification N6-acetyllysine; alternate. K395 is covalently cross-linked (Glycyl lysine isopeptide (Lys-Gly) (interchain with G-Cter in SUMO); alternate). S400 carries the phosphoserine; by CDK5 modification. The residue at position 407 (T407) is a Phosphothreonine. A compositionally biased stretch (pro residues) spans 417-430 (PQPPPPPPQAPQPQ). S438 bears the Phosphoserine; by MAPK mark. Over residues 438 to 451 (SPVDSLSSSSSSYD) the composition is skewed to low complexity. Basic and acidic residues-rich tracts occupy residues 452 to 462 (GSDREDPRGDF) and 473 to 492 (NSED…AWVT).

Binds DNA as a homo- or heterodimer. Dimerizes with MEF2D. Interacts with HDAC7. Interacts with PIAS1; the interaction enhances sumoylation. Interacts with HDAC4, HDAC9 and SLC2A4RG. Interacts (via the N-terminal) with MAPK7; the interaction results in the phosphorylation and transcriptional activity of MEF2A. Post-translationally, constitutive phosphorylation on Ser-400 promotes Lys-395 sumoylation thus preventing acetylation at this site. Dephosphorylation on Ser-400 by PPP3CA upon neuron depolarization promotes a switch from sumoylation to acetylation on residue Lys-395 leading to inhibition of dendrite claw differentiation. Phosphorylation on Thr-304 and Thr-311 are the main sites involved in p38 MAPK signaling and activate transcription. Phosphorylated on these sites by MAPK14/p38alpha and MAPK11/p38beta, but not by MAPK13/p38delta nor by MAPK12/p38gamma. Phosphorylation on Ser-400 by CDK5 induced by neurotoxicity inhibits MEF2A transcriptional activation leading to apoptosis of cortical neurons. Phosphorylation on Thr-304, Thr-311 and Ser-347 can be induced by EGF. In terms of processing, sumoylation on Lys-395 is enhanced by PIAS1 and represses transcriptional activity. Phosphorylation on Ser-400 is required for sumoylation. Has no effect on nuclear location nor on DNA binding. Sumoylated with SUMO1 and, to a lesser extent with SUMO2 and SUMO3. PIASx facilitates sumoylation in postsynaptic dendrites in the cerebellar cortex and promotes their morphogenesis. Acetylation on Lys-395 activates transcriptional activity. Acetylated by p300 on several sites in diffentiating myocytes. Acetylation on Lys-4 increases DNA binding and transactivation. Hyperacetylation by p300 leads to enhanced cardiac myocyte growth and heart failure. Post-translationally, proteolytically cleaved in cerebellar granule neurons on several sites by caspase 3 and caspase 7 following neurotoxicity. Preferentially cleaves the CDK5-mediated hyperphosphorylated form which leads to neuron apoptosis and transcriptional inactivation.

It localises to the nucleus. In terms of biological role, transcriptional activator which binds specifically to the MEF2 element, 5'-YTA[AT](4)TAR-3', found in numerous muscle-specific genes. Also involved in the activation of numerous growth factor- and stress-induced genes. Mediates cellular functions not only in skeletal and cardiac muscle development, but also in neuronal differentiation and survival. Plays diverse roles in the control of cell growth, survival and apoptosis via p38 MAPK signaling in muscle-specific and/or growth factor-related transcription. In cerebellar granule neurons, phosphorylated and sumoylated MEF2A represses transcription of NUR77 promoting synaptic differentiation. Associates with chromatin to the ZNF16 promoter. This is Myocyte-specific enhancer factor 2A (MEF2A) from Bos taurus (Bovine).